The following is a 2073-amino-acid chain: Putative mediator of RNA polymerase II transcription subunit 26 (2073 aa).

4 disordered regions span residues isoleucine 22–glutamine 94, proline 115–phenylalanine 146, glutamine 241–glutamine 260, and glutamine 287–glutamine 334. Residues asparagine 31–phenylalanine 41 show a composition bias toward polar residues. The span at asparagine 42–asparagine 78 shows a compositional bias: low complexity. Coiled-coil stretches lie at residues isoleucine 166–glutamine 453 and leucine 674–isoleucine 710. Low complexity-rich tracts occupy residues glutamine 287–glutamine 314 and glutamine 322–glutamine 334. 10 disordered regions span residues lysine 796–isoleucine 879, isoleucine 908–isoleucine 1175, asparagine 1215–asparagine 1260, asparagine 1403–lysine 1475, lysine 1489–proline 1539, alanine 1551–serine 1571, lysine 1587–lysine 1645, isoleucine 1804–serine 1836, asparagine 1868–asparagine 1935, and phenylalanine 2019–serine 2073. 2 stretches are compositionally biased toward low complexity: residues asparagine 798 to asparagine 870 and serine 923 to asparagine 937. A compositionally biased stretch (basic residues) spans lysine 938–serine 947. Positions leucine 953 to aspartate 963 are enriched in acidic residues. Low complexity-rich tracts occupy residues serine 964 to serine 977, alanine 1027 to threonine 1038, proline 1047 to threonine 1065, serine 1073 to serine 1115, and lysine 1127 to threonine 1156. Residues leucine 1157–serine 1166 show a composition bias toward polar residues. 2 stretches are compositionally biased toward low complexity: residues asparagine 1215–valine 1258 and asparagine 1403–asparagine 1424. The segment covering serine 1425–lysine 1440 has biased composition (basic and acidic residues). 4 stretches are compositionally biased toward low complexity: residues serine 1444–serine 1465, leucine 1490–proline 1520, serine 1527–proline 1539, and alanine 1551–glutamine 1560. A compositionally biased stretch (polar residues) spans glutamate 1561 to serine 1571. Low complexity-rich tracts occupy residues serine 1599–serine 1609 and isoleucine 1804–glutamate 1817. Residues asparagine 1884 to methionine 1930 adopt a coiled-coil conformation.

Belongs to the Mediator complex subunit 26 family. Component of the Mediator complex.

It localises to the nucleus. In terms of biological role, component of the Mediator complex, a coactivator involved in the regulated transcription of nearly all RNA polymerase II-dependent genes. Mediator functions as a bridge to convey information from gene-specific regulatory proteins to the basal RNA polymerase II transcription machinery. Mediator is recruited to promoters by direct interactions with regulatory proteins and serves as a scaffold for the assembly of a functional preinitiation complex with RNA polymerase II and the general transcription factors. This Dictyostelium discoideum (Social amoeba) protein is Putative mediator of RNA polymerase II transcription subunit 26 (med26).